We begin with the raw amino-acid sequence, 347 residues long: NHL repeat-containing protein 3 (347 aa).

The first 25 residues, 1–25 (MARFWVCVAGAGFFLAFLVLHSRFC), serve as a signal peptide directing secretion. N-linked (GlcNAc...) asparagine glycosylation occurs at N32. An NHL 1 repeat occupies 47–93 (RLDVGWPKHPEYFTGTTFCVAVDSLNGLVYIGQRGDNIPKILVFTED). N-linked (GlcNAc...) asparagine glycosylation is present at N101. NHL repeat units follow at residues 150–196 (TPGK…LSQD) and 200–243 (LWLH…FDKD). N-linked (GlcNAc...) asparagine glycans are attached at residues N206 and N278. The stretch at 294-338 (GECSVISTIQLADQVLPHLLEVDRKTGAVYVAEIGAKQVQKYVPL) is one NHL 4 repeat.

Its subcellular location is the secreted. The sequence is that of NHL repeat-containing protein 3 (NHLRC3) from Homo sapiens (Human).